The chain runs to 523 residues: Acetyl-coenzyme A carboxylase carboxyl transferase subunit beta, chloroplastic (523 aa).

The CoA carboxyltransferase N-terminal domain occupies 224 to 523 (FWVICENCHK…FVPSNQNSIK (300 aa)). Zn(2+) is bound by residues cysteine 228, cysteine 231, cysteine 247, and cysteine 250. Residues 228–250 (CENCHKFNYKRLFKSKMNICEEC) form a C4-type zinc finger.

The protein belongs to the AccD/PCCB family. In terms of assembly, acetyl-CoA carboxylase is a heterohexamer composed of biotin carboxyl carrier protein, biotin carboxylase and 2 subunits each of ACCase subunit alpha and ACCase plastid-coded subunit beta (accD). Requires Zn(2+) as cofactor.

The protein localises to the plastid. The protein resides in the chloroplast stroma. The catalysed reaction is N(6)-carboxybiotinyl-L-lysyl-[protein] + acetyl-CoA = N(6)-biotinyl-L-lysyl-[protein] + malonyl-CoA. Its pathway is lipid metabolism; malonyl-CoA biosynthesis; malonyl-CoA from acetyl-CoA: step 1/1. Its function is as follows. Component of the acetyl coenzyme A carboxylase (ACC) complex. Biotin carboxylase (BC) catalyzes the carboxylation of biotin on its carrier protein (BCCP) and then the CO(2) group is transferred by the transcarboxylase to acetyl-CoA to form malonyl-CoA. This Cucumis sativus (Cucumber) protein is Acetyl-coenzyme A carboxylase carboxyl transferase subunit beta, chloroplastic.